Here is a 247-residue protein sequence, read N- to C-terminus: Adenosylcobinamide-GDP ribazoletransferase (247 aa).

5 helical membrane passes run 34 to 54 (IITF…VFMA), 59 to 79 (FGVP…TGGF), 113 to 133 (GGLA…ELAL), 138 to 158 (ILAS…LLMY), and 194 to 214 (VLLP…AIFI).

This sequence belongs to the CobS family. Requires Mg(2+) as cofactor.

It localises to the cell inner membrane. It carries out the reaction alpha-ribazole + adenosylcob(III)inamide-GDP = adenosylcob(III)alamin + GMP + H(+). The catalysed reaction is alpha-ribazole 5'-phosphate + adenosylcob(III)inamide-GDP = adenosylcob(III)alamin 5'-phosphate + GMP + H(+). It participates in cofactor biosynthesis; adenosylcobalamin biosynthesis; adenosylcobalamin from cob(II)yrinate a,c-diamide: step 7/7. Joins adenosylcobinamide-GDP and alpha-ribazole to generate adenosylcobalamin (Ado-cobalamin). Also synthesizes adenosylcobalamin 5'-phosphate from adenosylcobinamide-GDP and alpha-ribazole 5'-phosphate. The polypeptide is Adenosylcobinamide-GDP ribazoletransferase (Escherichia coli O17:K52:H18 (strain UMN026 / ExPEC)).